A 146-amino-acid polypeptide reads, in one-letter code: Hemoglobin subunit beta-2 (146 aa).

The 145-residue stretch at 2-146 (GLTAHEKQLI…IADALGKGYH (145 aa)) folds into the Globin domain. Residues histidine 63 and histidine 92 each contribute to the heme b site.

This sequence belongs to the globin family. Heterotetramer of two alpha chains and two beta chains. As to expression, red blood cells.

In terms of biological role, involved in oxygen transport from the lung to the various peripheral tissues. This is Hemoglobin subunit beta-2 (hbb2) from Xenopus borealis (Kenyan clawed frog).